The sequence spans 364 residues: Cobalt-precorrin-5B C(1)-methyltransferase (364 aa).

The protein belongs to the CbiD family.

The catalysed reaction is Co-precorrin-5B + S-adenosyl-L-methionine = Co-precorrin-6A + S-adenosyl-L-homocysteine. The protein operates within cofactor biosynthesis; adenosylcobalamin biosynthesis; cob(II)yrinate a,c-diamide from sirohydrochlorin (anaerobic route): step 6/10. Catalyzes the methylation of C-1 in cobalt-precorrin-5B to form cobalt-precorrin-6A. The polypeptide is Cobalt-precorrin-5B C(1)-methyltransferase (Thermoplasma acidophilum (strain ATCC 25905 / DSM 1728 / JCM 9062 / NBRC 15155 / AMRC-C165)).